The sequence spans 388 residues: Mannitol-1-phosphate 5-dehydrogenase (388 aa).

Residue 5–16 (AIQFGGGNIGRG) participates in NAD(+) binding. Lysine 213 is a catalytic residue.

It belongs to the mannitol dehydrogenase family. In terms of assembly, monomer.

It catalyses the reaction D-mannitol 1-phosphate + NAD(+) = beta-D-fructose 6-phosphate + NADH + H(+). Its function is as follows. Catalyzes the NAD(H)-dependent interconversion of D-fructose 6-phosphate and D-mannitol 1-phosphate in the mannitol metabolic pathway. Has a strong preference for NADH over NADPH. Required for protection of conidiospores against exogenous stresses such as high temperatures and an oxidative environment. The polypeptide is Mannitol-1-phosphate 5-dehydrogenase (mpdA) (Aspergillus niger).